Reading from the N-terminus, the 1310-residue chain is Rho family-interacting cell polarization regulator 2 (1310 aa).

Residues serine 123 and serine 178 each carry the phosphoserine modification. The tract at residues 196 to 254 (MHNLGHKNTNTPKEPQPKRVEEVYRALKNGLDEYLEFHQTELDKLTAQLKDMKRNSRLG) is involved in cell filopodia formation. Positions 224-253 (NGLDEYLEFHQTELDKLTAQLKDMKRNSRL) form a coiled coil. The residue at position 508 (serine 508) is a Phosphoserine. Over residues 588–608 (SSLSSQNEGTEDSSSASSRNS) the composition is skewed to polar residues. Residues 588-639 (SSLSSQNEGTEDSSSASSRNSLGEDHEPKSHSKSDTVEPKKPSVDARSGTES) are disordered. Over residues 609-631 (LGEDHEPKSHSKSDTVEPKKPSV) the composition is skewed to basic and acidic residues. Position 682 is a phosphoserine (serine 682).

The protein belongs to the RIPOR family. Homooligomer; homooligomerization is regulated by RHOC and leads to the formation of concatemers through the association of N- and C-termini. Interacts (phosphorylated form) with 14-3-3 proteins; these interactions occur during myogenic cell differentiation and also induces T cell proliferation arrest. Interacts (phosphorylated form) with HDAC6; this interaction occurs during early myogenic differentiation, prevents HDAC6 to deacetylate tubulin and also induces T cell proliferation arrest. Interacts with DYSF; this interaction occurs during early myogenic differentiation. Interacts with MYOF. Interacts (via active GTP- or inactive GDP-bound forms) with RHOA; this interaction is direct, blocks the loading of GTP to RHOA and decreases upon chemokine CCL19 stimulation in primary T lymphocytes. Interacts with RHOC. Interacts (via phosphorylated form) with YWHAB; this interaction occurs in a chemokine-dependent manner and does not compete for binding of RIPOR2 with RHOA nor blocks inhibition of RIPOR2-mediated RHOA activity. Interacts with YWHAE. Interacts with YWHAQ. Phosphorylated. Chemokine-induced phosphorylation in neutrophils occurs in a PKC- and AKT-dependent manner, resulting in RIPOR2 interaction with YWHAB and stabilization. Phosphorylated by PKCA, AKT1 and MAPKAPK1A; in vitro. Expressed in the cochlea (at protein level).

The protein resides in the cytoplasm. The protein localises to the cytoskeleton. It localises to the cell projection. Its subcellular location is the filopodium. It is found in the apical cell membrane. The protein resides in the stereocilium. The protein localises to the stereocilium membrane. Acts as an inhibitor of the small GTPase RHOA and plays several roles in the regulation of myoblast and hair cell differentiation, lymphocyte T proliferation and neutrophil polarization. Plays a role in fetal mononuclear myoblast differentiation by promoting filopodia and myotube formation. Maintains naive T lymphocytes in a quiescent state and prevents chemokine-induced T lymphocyte responses, such as cell adhesion, polarization and migration. Involved also in the regulation of neutrophil polarization, chemotaxis and adhesion. Required for normal development of inner and outer hair cell stereocilia within the cochlea of the inner ear. Plays a role for maintaining the structural organization of the basal domain of stereocilia. Involved in mechanosensory hair cell function. Required for normal hearing. This Rattus norvegicus (Rat) protein is Rho family-interacting cell polarization regulator 2.